Here is a 269-residue protein sequence, read N- to C-terminus: Putative ankyrin repeat protein L23 (269 aa).

ANK repeat units lie at residues 118 to 147 (EDDY…DIKS), 148 to 177 (DGDY…DIRA), 179 to 207 (NDYA…NIRE), 208 to 237 (QNDY…DIRA), and 238 to 267 (DNDC…DIRA).

The chain is Putative ankyrin repeat protein L23 from Acanthamoeba polyphaga (Amoeba).